The primary structure comprises 372 residues: 3-galactosyl-N-acetylglucosaminide 4-alpha-L-fucosyltransferase FUT3 (372 aa).

Topologically, residues 1 to 15 (MDPLGAAKPQWPWRR) are cytoplasmic. A helical; Signal-anchor for type II membrane protein transmembrane segment spans residues 16-34 (CLAALLFQLLVAVCFFSYL). At 35–372 (RVSRDDATGS…TMRSIAAWFT (338 aa)) the chain is on the lumenal side. The disordered stretch occupies residues 40-69 (DATGSPRPGLMAVEPVTGAPSGSSRQDTTP). Residues N165 and N196 are each glycosylated (N-linked (GlcNAc...) asparagine).

The protein belongs to the glycosyltransferase 10 family. Glycosylated.

It localises to the golgi apparatus. Its subcellular location is the golgi stack membrane. It catalyses the reaction a beta-D-galactosyl-(1-&gt;3)-N-acetyl-beta-D-glucosaminyl derivative + GDP-beta-L-fucose = a beta-D-galactosyl-(1-&gt;3)-[alpha-L-fucosyl-(1-&gt;4)]-N-acetyl-beta-D-glucosaminyl derivative + GDP + H(+). The enzyme catalyses an N-acetyl-alpha-neuraminyl-(2-&gt;3)-beta-D-galactosyl-(1-&gt;4)-N-acetyl-beta-D-glucosaminyl derivative + GDP-beta-L-fucose = an alpha-Neu5Ac-(2-&gt;3)-beta-D-Gal-(1-&gt;4)-[alpha-L-Fuc-(1-&gt;3)]-beta-D-GlcNAc derivative + GDP + H(+). The catalysed reaction is a beta-D-galactosyl-(1-&gt;4)-N-acetyl-beta-D-glucosaminyl derivative + GDP-beta-L-fucose = a beta-D-galactosyl-(1-&gt;4)-[alpha-L-fucosyl-(1-&gt;3)]-N-acetyl-beta-D-glucosaminyl derivative + GDP + H(+). It carries out the reaction an alpha-Neu5Ac-(2-&gt;3)-beta-D-Gal-(1-&gt;4)-beta-D-GlcNAc-(1-&gt;3)-beta-D-Gal-(1-&gt;4)-[alpha-L-Fuc-(1-&gt;3)]-beta-D-GlcNAc derivative + GDP-beta-L-fucose = an alpha-Neu5Ac-(2-&gt;3)-beta-D-Gal-(1-&gt;4)-[alpha-L-Fuc-(1-&gt;3)]-beta-D-GlcNAc-(1-&gt;3)-beta-D-Gal-(1-&gt;4)-[alpha-L-Fuc-(1-&gt;3)]-beta-D-GlcNAc derivative + GDP + H(+). It catalyses the reaction Lc4Cer + GDP-beta-L-fucose = a lactoside III(4)-a-Fuc-Lc4Cer + GDP + H(+). The enzyme catalyses a beta-D-Gal-(1-&gt;3)-beta-D-GlcNAc-(1-&gt;3)-beta-D-Gal-(1-&gt;4)-beta-D-Glc-(1&lt;-&gt;1')-Cer(d18:1(4E)) + GDP-beta-L-fucose = a III(4)-a-Fuc-Lc4Cer(d18:1(4E)) + GDP + H(+). The catalysed reaction is N-acetyl-alpha-neuraminosyl-(2-&gt;3)-beta-D-galactosyl-(1-&gt;3)-[N-acetyl-alpha-neuraminosyl-(2-&gt;6)]-N-acetyl-beta-D-glucosaminyl-(1-&gt;3)-beta-D-galactosyl-(1-&gt;4)-beta-D-glucosyl-(1&lt;-&gt;1')-N-acyl-sphing-4-enine + GDP-beta-L-fucose = N-acetyl-alpha-neuraminosyl-(2-&gt;3)-beta-D-galactosyl-(1-&gt;3)-alpha-L-fucosyl-(1-&gt;4)-[N-acetyl-alpha-neuraminosyl-(2-&gt;6)-N-acetyl-beta-D-glucosaminyl-(1-&gt;3)]-beta-D-galactosyl-(1-&gt;4)-beta-D-glucosyl-(1&lt;-&gt;1')-N-acyl-sphing-4-enine + GDP + H(+). It carries out the reaction N-acetyl-alpha-neuraminosyl-(2-&gt;3)-beta-D-galactosyl-(1-&gt;3)-N-acetyl-beta-D-glucosaminyl-(1-&gt;3)-beta-D-galactosyl-(1-&gt;4)-beta-D-glucosyl-(1&lt;-&gt;1')-N-acyl-sphing-4-enine + GDP-beta-L-fucose = N-acetyl-alpha-neuraminosyl-(2-&gt;3)-beta-D-galactosyl-(1-&gt;3)-alpha-L-fucosyl-(1-&gt;4)-[N-acetyl-beta-D-glucosaminyl-(1-&gt;3)]-beta-D-galactosyl-(1-&gt;4)-beta-D-glucosyl-(1&lt;-&gt;1')-N-acyl-sphing-4-enine + GDP + H(+). It catalyses the reaction beta-D-galactosyl-(1-&gt;3)-N-acetyl-D-glucosamine + GDP-beta-L-fucose = beta-D-galactosyl-(1-&gt;3)-[alpha-L-fucosyl-(1-&gt;4)]-N-acetyl-D-glucosamine + GDP + H(+). The enzyme catalyses alpha-L-Fuc-(1-&gt;2)-beta-D-Gal-(1-&gt;3)-D-GlcNAc + GDP-beta-L-fucose = alpha-L-Fuc-(1-&gt;2)-beta-D-Gal-(1-&gt;3)-[alpha-L-Fuc-(1-&gt;4)]-D-GlcNAc + GDP + H(+). The catalysed reaction is alpha-L-Fuc-(1-&gt;2)-beta-D-Gal-(1-&gt;4)-D-GlcNAc + GDP-beta-L-fucose = alpha-L-Fuc-(1-&gt;2)-beta-D-Gal-(1-&gt;4)-[alpha-L-Fuc-(1-&gt;3)]-D-GlcNAc + GDP + H(+). It carries out the reaction beta-D-galactosyl-(1-&gt;4)-N-acetyl-D-glucosamine + GDP-beta-L-fucose = beta-D-galactosyl-(1-&gt;4)-[alpha-L-fucosyl-(1-&gt;3)]-N-acetyl-D-glucosamine + GDP + H(+). It catalyses the reaction lactose + GDP-beta-L-fucose = beta-D-galactosyl-(1-&gt;4)-[alpha-L-fucosyl-(1-&gt;3)]-D-glucose + GDP + H(+). The enzyme catalyses an alpha-Neu5Ac-(2-&gt;3)-beta-D-Gal-(1-&gt;3)-D-GlcNAc derivative + GDP-beta-L-fucose = an alpha-Neu5Ac-(2-&gt;3)-beta-D-Gal-(1-&gt;3)-[alpha-L-Fuc-(1-&gt;4)]-beta-D-GlcNAc derivative + GDP + H(+). It functions in the pathway protein modification; protein glycosylation. Functionally, catalyzes the transfer of L-fucose, from a guanosine diphosphate-beta-L-fucose, to both the subterminal N-acetyl glucosamine (GlcNAc) of type 1 chain (beta-D-Gal-(1-&gt;3)-beta-D-GlcNAc) glycolipids and oligosaccharides via an alpha(1,4) linkage, and the subterminal glucose (Glc) or GlcNAc of type 2 chain (beta-D-Gal-(1-&gt;4)-beta-D-GlcNAc) oligosaccharides via an alpha(1,3) linkage, independently of the presence of terminal alpha-L-fucosyl-(1,2) moieties on the terminal galactose of these acceptors and participates in the blood groups Lewis determination and expression of Lewis a (Le(a)), lewis b (Le(b)), Lewis x/SSEA-1 (Le(x)) and lewis y (Le(y)) antigens. Also catalyzes the transfer of L-fucose to subterminal GlcNAc of sialyl- and disialyl-lactotetraosylceramide to produce sialyl Lewis a (sLe(a)) and disialyl Lewis a via an alpha(1,4) linkage and therefore may regulate cell surface sialyl Lewis a expression and consequently regulates adhesive properties to E-selectin, cell proliferation and migration. Catalyzes the transfer of an L-fucose to 3'-sialyl-N-acetyllactosamine by an alpha(1,3) linkage, which allows the formation of sialyl-Lewis x structure and therefore may regulate the sialyl-Lewis x surface antigen expression and consequently adhesive properties to E-selectin. Prefers type 1 chain over type 2 acceptors. Type 1 tetrasaccharide is a better acceptor than type 1 disaccharide suggesting that a beta anomeric configuration of GlcNAc in the substrate is preferred. Lewis-positive (Le(+)) individuals have an active enzyme while Lewis-negative (Le(-)) individuals have an inactive enzyme. The protein is 3-galactosyl-N-acetylglucosaminide 4-alpha-L-fucosyltransferase FUT3 of Pan troglodytes (Chimpanzee).